The primary structure comprises 735 residues: MAWPWRRRRWRWRRRRPRWRRWRRRRTWRRRPRRAVRRRRVRRRGRGWRRLYRRYRRRRGRRTYKKKPVLTQWQPTVRRRCFIIGYMPLIICGENLTSKNYASHADDFVKDGPFGGGMTTMQFSLRILYDEFLRFLNIWTHSNQDLDLARYHGFKLTLYRHPTVDFIVIIRNSPPFEDTELTGPNTHPGMLMLRHKKILVPSLRTRPSRRHKITVRIGPPKLFEDKWYSQTDICDVILATVYATACDLQYPFGSPLTENYCISFQVLGSAYNNLISNTLNPNEEQQDIKSAIYNNVNAYLTRITESHMANLISKAPPKQVLKSSDGSLQTDHNDTQFGGNPYNTNQFTTTTVNKIIQGAQNYLTTIKTHLQPNNSAINPNTQWHLEYHAGIYSAPFLSAGRLNPEIKGLYTDITYNPMMDKGTGNKIWCDSLTKADMKYTEGRSKYLIENLPLWAAVWGYLDYCTKTSGDAAFHYNYRVTLISPYTSPMLFNPQDPTKGFVPYSLNFGLGKMPGGKGYVPLRMRANWYPYFFHQQKVLEAIGMSGPFTYRSDEKKAVLTSRYKFKFTWGGNPVSHQVVRNPCKGTGGASASRKPRSVQVTDPKYNTPEITTHTWDIRRGWFGKRFIDRVQQQQASPELLADPPKRPRKEIKGLTEADQEAEKDSGLRLRQVQPWMSSQETQSEQESAPEEQTVEQQLRNQLHTQQLLGFQLRSLMYQVQQTHRNSFIHPLLLPRA.

Disordered regions lie at residues 577–604 (VVRN…DPKY) and 632–695 (QQAS…TVEQ). The segment covering 649-666 (EIKGLTEADQEAEKDSGL) has biased composition (basic and acidic residues). Low complexity predominate over residues 676–685 (SSQETQSEQE).

Belongs to the anelloviridae capsid protein family.

The protein resides in the virion. Its function is as follows. Self assemble to form an icosahedral capsid. This Pan troglodytes (Chimpanzee) protein is Capsid protein.